The primary structure comprises 183 residues: Translation initiation factor IF-3 (183 aa).

It belongs to the IF-3 family. In terms of assembly, monomer.

It is found in the cytoplasm. Its function is as follows. IF-3 binds to the 30S ribosomal subunit and shifts the equilibrium between 70S ribosomes and their 50S and 30S subunits in favor of the free subunits, thus enhancing the availability of 30S subunits on which protein synthesis initiation begins. This chain is Translation initiation factor IF-3, found in Pseudomonas aeruginosa (strain ATCC 15692 / DSM 22644 / CIP 104116 / JCM 14847 / LMG 12228 / 1C / PRS 101 / PAO1).